A 176-amino-acid polypeptide reads, in one-letter code: uncharacterized protein (176 aa).

This is an uncharacterized protein from Dictyostelium discoideum (Social amoeba).